We begin with the raw amino-acid sequence, 539 residues long: MSSTAENGDAVPGKQNEEKTYKKTASSAIKGAIQLGIGYTVGNLTSKPERDVLMQDFYVVESVFLPSEGSNLTPAHHYPDFRFKTYAPLAFRYFRELFGIKPDDYLYSICSEPLIELSNPGASGSLFFLTSDDEFIIKTVQHKEAEFLQKLLPGYYMNLNQNPRTLLPKFYGLYCMQSGGINIRIVVMNNVLPRAMRMHLTYDLKGSTYKRRASRKEREKPNPTFKDLDFLQDMHEGLYFDTETYNALMKTLQRDCRVLESFKIMDYSLLLGIHILDHSLKDKEEEPLQNAPDAKRPGMQKVLYSTAMESIQGPGKSADGIIAENPDTMGGIPAKSHKGEKLLLFMGIIDILQSYRLMKKLEHSWKALVYDGDTVSVHRPSFYADRFLKFMNSRVFKKIQALKASPSKKRCNSIAALKATSQEILSSISQEWKDEKQDLLTEGQSFSSLDEEALGSRHRPDLVPSTPSLFEAASLATTISSSSLYVGEHYPHDRTTLYSNSKGLPSSSTFTLEEGTIYLTAEPNALETQDDASVLDVYL.

The disordered stretch occupies residues 1-21 (MSSTAENGDAVPGKQNEEKTY). Positions 25-395 (ASSAIKGAIQ…RFLKFMNSRV (371 aa)) constitute a PIPK domain. Phosphoserine is present on residues S445, S447, and S448.

Interacts with RAC1, AJUBA, PLD1, PLD2 and ARF1.

The protein localises to the cytoplasm. Its subcellular location is the cytosol. The protein resides in the cell membrane. It localises to the endomembrane system. It catalyses the reaction a 1,2-diacyl-sn-glycero-3-phospho-(1D-myo-inositol 4-phosphate) + ATP = a 1,2-diacyl-sn-glycero-3-phospho-(1D-myo-inositol-4,5-bisphosphate) + ADP + H(+). It carries out the reaction 1-octadecanoyl-2-(5Z,8Z,11Z,14Z)-eicosatetraenoyl-sn-glycero-3-phospho-1D-myo-inositol 4-phosphate + ATP = 1-octadecanoyl-2-(5Z,8Z,11Z,14Z)-eicosatetraenoyl-sn-glycero-3-phospho-1D-myo-inositol 4,5-bisphosphate + ADP + H(+). The enzyme catalyses 1-octadecanoyl-2-(9Z)-octadecenoyl-sn-glycero-3-phospho-1D-myo-inositol 4-phosphate + ATP = 1-octadecanoyl-2-(9Z)-octadecenoyl-sn-glycero-3-phospho-1D-myo-inositol 4,5-bisphosphate + ADP + H(+). The catalysed reaction is 1-octadecanoyl-2-(9Z)-octadecenoyl-sn-glycero-3-phospho-1D-myo-inositol + ATP = 1-octadecanoyl-2-(9Z)-octadecenoyl-sn-glycero-3-phospho-1D-myo-inositol 5-phosphate + ADP + H(+). It catalyses the reaction 1-octadecanoyl-2-(9Z,12Z)-octadecadienoyl-sn-glycero-3-phospho-1D-myo-inositol + ATP = 1-octadecanoyl-2-(9Z,12Z)-octadecadienoyl-sn-glycero-3-phospho-1D-myo-inositol 5-phosphate + ADP + H(+). It carries out the reaction 1-octadecanoyl-2-(5Z,8Z,11Z,14Z-eicosatetraenoyl)-sn-glycero-3-phospho-(1D-myo-inositol) + ATP = 1-octadecanoyl-2-(5Z,8Z,11Z,14Z)-eicosatetraenoyl-sn-glycero-3-phospho-1D-myo-inositol 5-phosphate + ADP + H(+). The enzyme catalyses 1,2-di-(9Z,12Z)-octadecadienoyl-sn-glycero-3-phospho-1D-myo-inositol + ATP = 1,2-di(9Z,12Z)-octadecadienoyl-sn-glycero-3-phospho-1D-myo-inositol 5-phosphate + ADP + H(+). In terms of biological role, catalyzes the phosphorylation of phosphatidylinositol 4-phosphate (PtdIns(4)P/PI4P) to form phosphatidylinositol 4,5-bisphosphate (PtdIns(4,5)P2/PIP2), a lipid second messenger that regulates several cellular processes such as signal transduction, vesicle trafficking, actin cytoskeleton dynamics, cell adhesion, and cell motility. PtdIns(4,5)P2 can directly act as a second messenger or can be utilized as a precursor to generate other second messengers: inositol 1,4,5-trisphosphate (IP3), diacylglycerol (DAG) or phosphatidylinositol-3,4,5-trisphosphate (PtdIns(3,4,5)P3/PIP3). Mediates RAC1-dependent reorganization of actin filaments. Contributes to the activation of phospholipase PLD2. Together with PIP5K1A, is required, after stimulation by G-protein coupled receptors, for the synthesis of IP3 that will induce stable platelet adhesion. The polypeptide is Phosphatidylinositol 4-phosphate 5-kinase type-1 beta (Rattus norvegicus (Rat)).